Here is a 290-residue protein sequence, read N- to C-terminus: Coiled-coil domain-containing protein 137 (290 aa).

4 disordered regions span residues 1–92 (MARP…EAQV), 98–117 (LEKE…FKQR), 139–181 (LSKN…EARA), and 269–290 (RQEM…HACL). Residues 20–39 (SGQPQGRRQQQAQGQQRSAS) are compositionally biased toward low complexity. Residues 56 to 79 (KNQDEQEIPFRLREIMRSRQEMKK) show a composition bias toward basic and acidic residues. Positions 66–89 (RLREIMRSRQEMKKTLSNKKRKKE) form a coiled coil. The segment covering 154–163 (PKKEKSERKK) has biased composition (basic and acidic residues). Positions 155 to 192 (KKEKSERKKAFQKRRLEKAQRKREARAVDRLEQELLKD) form a coiled coil. Over residues 164–178 (AFQKRRLEKAQRKRE) the composition is skewed to basic residues.

It is found in the chromosome. In Mus musculus (Mouse), this protein is Coiled-coil domain-containing protein 137 (Ccdc137).